A 357-amino-acid polypeptide reads, in one-letter code: Peptide chain release factor 1 (357 aa).

Position 236 is an N5-methylglutamine (Gln-236). Over residues 283–309 (ERRKKDQERANNRREQIGSGDRSERIR) the composition is skewed to basic and acidic residues. The interval 283–313 (ERRKKDQERANNRREQIGSGDRSERIRTYNF) is disordered.

This sequence belongs to the prokaryotic/mitochondrial release factor family. Post-translationally, methylated by PrmC. Methylation increases the termination efficiency of RF1.

It is found in the cytoplasm. In terms of biological role, peptide chain release factor 1 directs the termination of translation in response to the peptide chain termination codons UAG and UAA. The polypeptide is Peptide chain release factor 1 (Rickettsia bellii (strain OSU 85-389)).